A 236-amino-acid chain; its full sequence is 2,3,4,5-tetrahydropyridine-2,6-dicarboxylate N-acetyltransferase (236 aa).

Belongs to the transferase hexapeptide repeat family. DapH subfamily.

The enzyme catalyses (S)-2,3,4,5-tetrahydrodipicolinate + acetyl-CoA + H2O = L-2-acetamido-6-oxoheptanedioate + CoA. Its pathway is amino-acid biosynthesis; L-lysine biosynthesis via DAP pathway; LL-2,6-diaminopimelate from (S)-tetrahydrodipicolinate (acetylase route): step 1/3. Catalyzes the transfer of an acetyl group from acetyl-CoA to tetrahydrodipicolinate. This is 2,3,4,5-tetrahydropyridine-2,6-dicarboxylate N-acetyltransferase from Geobacillus sp. (strain WCH70).